Consider the following 487-residue polypeptide: MVNTQNQISQTSDLDYIVNQPYKYGFTTSVESEQFPRGISREVVKLISKKKNEPEYLLNFRLKAYEKWTKMKNPKWAHLKHPNIDFNSIIYYAVPKLKKELNSLDEVDPEILDTFNKLGISLNEQKRLSNVAVDAVFDSVSIATTFKKELAEAGVIFCSISEAIRNYPDLIQKYLGTVVPSGDNYFAALNSAVFSDGSFCYIPPDTVCPLELSTYFRINNEESGQFERTLIVADRGSKVSYLEGCTAPQYDTNQLHAAIVELIALDDAEIKYSTVQNWYAGNKDGKGGIYNFVTKRGLCSGKNSKISWTQVETGSAITWKYPGCILAGDNSQGEFYSVALTNNYQEADTGTKMIHIGNNTKSKIISKGISAGKSKNSYRGLVKIGPQSFNSRNYSQCDSLLIGQSSQANTFPYIQVQNPTAKVEHEASTSKISEDQIFYFLQRGINLEESVSLMISGFCKDVFNELPMEFAVEADRLLSLKLEGTVG.

This sequence belongs to the iron-sulfur cluster assembly SufBD family.

It localises to the plastid. The protein resides in the chloroplast. The sequence is that of Iron-sulfur cluster assembly SufBD family protein ycf24 (ycf24) from Porphyra purpurea (Red seaweed).